Reading from the N-terminus, the 396-residue chain is Apolipoprotein A-IV (396 aa).

A signal peptide spans methionine 1 to alanine 20. 13 consecutive repeat copies span residues aspartate 33–leucine 54, alanine 60–valine 81, proline 82–glycine 103, proline 115–glutamate 136, proline 137–threonine 158, proline 159–arginine 180, proline 181–threonine 202, proline 203–alanine 224, proline 225–lysine 246, lysine 247–alanine 268, proline 269–glutamine 286, lysine 287–glutamate 308, and proline 309–glycine 330. Positions aspartate 33–glycine 330 are 13 X 22 AA approximate tandem repeats. The interval lysine 361–serine 396 is disordered. Positions glutamate 374–glutamine 389 are enriched in low complexity.

It belongs to the apolipoprotein A1/A4/E family. In terms of assembly, homodimer. Phosphorylation sites are present in the extracellular medium. In terms of tissue distribution, synthesized primarily in the intestine and secreted in plasma.

The protein resides in the secreted. May have a role in chylomicrons and VLDL secretion and catabolism. Required for efficient activation of lipoprotein lipase by ApoC-II; potent activator of LCAT. Apoa-IV is a major component of HDL and chylomicrons. The sequence is that of Apolipoprotein A-IV from Homo sapiens (Human).